The sequence spans 238 residues: NAD(P)H-hydrate epimerase (238 aa).

Residues 10–225 enclose the YjeF N-terminal domain; that stretch reads AIKVDQILFN…ALQRQYELNL (216 aa). Position 68–72 (68–72) interacts with (6S)-NADPHX; that stretch reads NNGGD. K(+) is bound by residues Asn69 and Asp133. (6S)-NADPHX is bound by residues 137–143 and Asp166; that span reads GFSFKPP. Ser169 contacts K(+).

The protein belongs to the NnrE/AIBP family. The cofactor is K(+).

It carries out the reaction (6R)-NADHX = (6S)-NADHX. The enzyme catalyses (6R)-NADPHX = (6S)-NADPHX. Functionally, catalyzes the epimerization of the S- and R-forms of NAD(P)HX, a damaged form of NAD(P)H that is a result of enzymatic or heat-dependent hydration. This is a prerequisite for the S-specific NAD(P)H-hydrate dehydratase to allow the repair of both epimers of NAD(P)HX. The protein is NAD(P)H-hydrate epimerase of Drosophila willistoni (Fruit fly).